The chain runs to 670 residues: Tyramine beta-hydroxylase (670 aa).

Positions histidine 26–lysine 35 are enriched in basic residues. A disordered region spans residues histidine 26 to arginine 63. Over residues glutamine 38 to glutamine 61 the composition is skewed to low complexity. The helical transmembrane segment at proline 65–threonine 81 threads the bilayer. Residues lysine 104 to glycine 220 form the DOMON domain. Asparagine 235 carries an N-linked (GlcNAc...) asparagine glycan. The active site involves tyrosine 281. Intrachain disulfides connect cysteine 283–cysteine 334 and cysteine 319–cysteine 344. Histidine 312 and histidine 313 together coordinate Cu(2+). Residues histidine 382, histidine 461, histidine 463, and methionine 536 each coordinate Cu(2+). 3 cysteine pairs are disulfide-bonded: cysteine 439/cysteine 552, cysteine 443/cysteine 613, and cysteine 515/cysteine 537. Residue histidine 461 is part of the active site. The N-linked (GlcNAc...) asparagine glycan is linked to asparagine 614.

Belongs to the copper type II ascorbate-dependent monooxygenase family. Is most likely a monomer under physiological conditions, although under conditions of high pH and low ionic strength the dimeric form predominates. Both forms are equally active. Cu(2+) is required as a cofactor. In terms of tissue distribution, present in head and in neurons innervating the oviduct (at protein level).

It is found in the membrane. It carries out the reaction tyramine + L-ascorbate + O2 = (R)-octopamine + L-dehydroascorbate + H2O. In terms of biological role, catalyzes the hydroxylation of tyramine into octopamine, a neurotransmitter involved in ovulation and locomotion. Functions in an amine-mediated Bacc-dependent signaling pathway that negatively regulates acute ethanol sensitivity. Involved in facilitation of nociceptive escape behavior in response to potentially damaging stimuli, such as high temperatures. The polypeptide is Tyramine beta-hydroxylase (Tbh) (Drosophila melanogaster (Fruit fly)).